A 588-amino-acid polypeptide reads, in one-letter code: L-fucose isomerase (588 aa).

Active-site proton acceptor residues include E335 and D359. Mn(2+) is bound by residues E335, D359, and H525.

Belongs to the L-fucose isomerase family. Mn(2+) serves as cofactor.

Its subcellular location is the cytoplasm. It carries out the reaction L-fucose = L-fuculose. Its pathway is carbohydrate degradation; L-fucose degradation; L-lactaldehyde and glycerone phosphate from L-fucose: step 1/3. Functionally, converts the aldose L-fucose into the corresponding ketose L-fuculose. The polypeptide is L-fucose isomerase (Streptococcus pneumoniae (strain ATCC 700669 / Spain 23F-1)).